The sequence spans 226 residues: Ribose-5-phosphate isomerase A (226 aa).

Substrate contacts are provided by residues 32–35 (TGST), 85–88 (DGAD), and 98–101 (KGGG). Catalysis depends on Glu107, which acts as the Proton acceptor. Position 125 (Lys125) interacts with substrate.

Belongs to the ribose 5-phosphate isomerase family. In terms of assembly, homodimer.

It carries out the reaction aldehydo-D-ribose 5-phosphate = D-ribulose 5-phosphate. Its pathway is carbohydrate degradation; pentose phosphate pathway; D-ribose 5-phosphate from D-ribulose 5-phosphate (non-oxidative stage): step 1/1. Its function is as follows. Catalyzes the reversible conversion of ribose-5-phosphate to ribulose 5-phosphate. The polypeptide is Ribose-5-phosphate isomerase A (Saccharophagus degradans (strain 2-40 / ATCC 43961 / DSM 17024)).